We begin with the raw amino-acid sequence, 395 residues long: NAD(P)H-quinone oxidoreductase subunit H, chloroplastic (395 aa).

The protein belongs to the complex I 49 kDa subunit family. As to quaternary structure, NDH is composed of at least 16 different subunits, 5 of which are encoded in the nucleus.

The protein resides in the plastid. It is found in the chloroplast thylakoid membrane. The catalysed reaction is a plastoquinone + NADH + (n+1) H(+)(in) = a plastoquinol + NAD(+) + n H(+)(out). The enzyme catalyses a plastoquinone + NADPH + (n+1) H(+)(in) = a plastoquinol + NADP(+) + n H(+)(out). NDH shuttles electrons from NAD(P)H:plastoquinone, via FMN and iron-sulfur (Fe-S) centers, to quinones in the photosynthetic chain and possibly in a chloroplast respiratory chain. The immediate electron acceptor for the enzyme in this species is believed to be plastoquinone. Couples the redox reaction to proton translocation, and thus conserves the redox energy in a proton gradient. In Staurastrum punctulatum (Green alga), this protein is NAD(P)H-quinone oxidoreductase subunit H, chloroplastic.